A 119-amino-acid polypeptide reads, in one-letter code: Large ribosomal subunit protein uL18 (119 aa).

It belongs to the universal ribosomal protein uL18 family. In terms of assembly, part of the 50S ribosomal subunit; part of the 5S rRNA/L5/L18/L25 subcomplex. Contacts the 5S and 23S rRNAs.

Functionally, this is one of the proteins that bind and probably mediate the attachment of the 5S RNA into the large ribosomal subunit, where it forms part of the central protuberance. The sequence is that of Large ribosomal subunit protein uL18 from Clostridium tetani (strain Massachusetts / E88).